The primary structure comprises 60 residues: UPF0434 protein Bpro_2950 (60 aa).

This sequence belongs to the UPF0434 family.

The chain is UPF0434 protein Bpro_2950 from Polaromonas sp. (strain JS666 / ATCC BAA-500).